The following is a 396-amino-acid chain: Tyrosine--tRNA ligase (396 aa).

Positions 42–51 (PTAPDIHLGH) match the 'HIGH' region motif. The short motif at 226–230 (KMSKS) is the 'KMSKS' region element. An ATP-binding site is contributed by lysine 229. Residues 334-395 (LPIANLLKEA…GKRKFAKIII (62 aa)) enclose the S4 RNA-binding domain.

The protein belongs to the class-I aminoacyl-tRNA synthetase family. TyrS type 2 subfamily. In terms of assembly, homodimer.

Its subcellular location is the cytoplasm. The catalysed reaction is tRNA(Tyr) + L-tyrosine + ATP = L-tyrosyl-tRNA(Tyr) + AMP + diphosphate + H(+). Catalyzes the attachment of tyrosine to tRNA(Tyr) in a two-step reaction: tyrosine is first activated by ATP to form Tyr-AMP and then transferred to the acceptor end of tRNA(Tyr). The sequence is that of Tyrosine--tRNA ligase from Francisella tularensis subsp. tularensis (strain SCHU S4 / Schu 4).